We begin with the raw amino-acid sequence, 454 residues long: Bifunctional protein GlmU (454 aa).

The interval 1 to 226 (MSLDIVILAA…AMEVQGANDR (226 aa)) is pyrophosphorylase. UDP-N-acetyl-alpha-D-glucosamine-binding positions include 8–11 (LAAG), lysine 22, glutamine 73, 78–79 (GT), 99–101 (YGD), glycine 136, glutamate 151, asparagine 166, and asparagine 224. Aspartate 101 lines the Mg(2+) pocket. Residue asparagine 224 coordinates Mg(2+). The interval 227-247 (LQLAQLERHYQSRVARRLMAQ) is linker. Positions 248-454 (GVTLRDPARF…GWQRPTKQKK (207 aa)) are N-acetyltransferase. Arginine 330 and lysine 348 together coordinate UDP-N-acetyl-alpha-D-glucosamine. The active-site Proton acceptor is the histidine 360. Positions 363 and 374 each coordinate UDP-N-acetyl-alpha-D-glucosamine. Acetyl-CoA is bound by residues alanine 377, 383-384 (NY), serine 402, alanine 420, and arginine 437.

It in the N-terminal section; belongs to the N-acetylglucosamine-1-phosphate uridyltransferase family. In the C-terminal section; belongs to the transferase hexapeptide repeat family. Homotrimer. Mg(2+) serves as cofactor.

It localises to the cytoplasm. It catalyses the reaction alpha-D-glucosamine 1-phosphate + acetyl-CoA = N-acetyl-alpha-D-glucosamine 1-phosphate + CoA + H(+). It carries out the reaction N-acetyl-alpha-D-glucosamine 1-phosphate + UTP + H(+) = UDP-N-acetyl-alpha-D-glucosamine + diphosphate. It participates in nucleotide-sugar biosynthesis; UDP-N-acetyl-alpha-D-glucosamine biosynthesis; N-acetyl-alpha-D-glucosamine 1-phosphate from alpha-D-glucosamine 6-phosphate (route II): step 2/2. The protein operates within nucleotide-sugar biosynthesis; UDP-N-acetyl-alpha-D-glucosamine biosynthesis; UDP-N-acetyl-alpha-D-glucosamine from N-acetyl-alpha-D-glucosamine 1-phosphate: step 1/1. Its pathway is bacterial outer membrane biogenesis; LPS lipid A biosynthesis. Catalyzes the last two sequential reactions in the de novo biosynthetic pathway for UDP-N-acetylglucosamine (UDP-GlcNAc). The C-terminal domain catalyzes the transfer of acetyl group from acetyl coenzyme A to glucosamine-1-phosphate (GlcN-1-P) to produce N-acetylglucosamine-1-phosphate (GlcNAc-1-P), which is converted into UDP-GlcNAc by the transfer of uridine 5-monophosphate (from uridine 5-triphosphate), a reaction catalyzed by the N-terminal domain. In Azotobacter vinelandii (strain DJ / ATCC BAA-1303), this protein is Bifunctional protein GlmU.